The sequence spans 147 residues: Lysozyme C-3 (147 aa).

A signal peptide spans 1 to 18 (MKALVILGLLFLSVAVQG). The C-type lysozyme domain occupies 19-147 (KVFERCELAR…VSSYVEGCKL (129 aa)). Intrachain disulfides connect cysteine 24–cysteine 145, cysteine 48–cysteine 133, cysteine 83–cysteine 99, and cysteine 95–cysteine 113. Residues glutamate 53 and aspartate 71 contribute to the active site.

This sequence belongs to the glycosyl hydrolase 22 family. In terms of assembly, monomer. Expressed in stomach.

The protein localises to the secreted. It catalyses the reaction Hydrolysis of (1-&gt;4)-beta-linkages between N-acetylmuramic acid and N-acetyl-D-glucosamine residues in a peptidoglycan and between N-acetyl-D-glucosamine residues in chitodextrins.. Lysozymes have primarily a bacteriolytic function; those in tissues and body fluids are associated with the monocyte-macrophage system and enhance the activity of immunoagents. The sequence is that of Lysozyme C-3 from Ovis aries (Sheep).